Consider the following 278-residue polypeptide: Elongation factor Ts (278 aa).

Residues 79–82 (TDFV) are involved in Mg(2+) ion dislocation from EF-Tu.

It belongs to the EF-Ts family.

It is found in the cytoplasm. Associates with the EF-Tu.GDP complex and induces the exchange of GDP to GTP. It remains bound to the aminoacyl-tRNA.EF-Tu.GTP complex up to the GTP hydrolysis stage on the ribosome. The protein is Elongation factor Ts of Borrelia duttonii (strain Ly).